The primary structure comprises 344 residues: METPAVSLLVAVYNTETYIRTCLESLRNQTMDNIEIIIVNDGSADASPDIAEEYAKMDNRFKVIHQENQGLGAVRNKGIEAARGEFIAFIDSDDWIEPDYCEQMLRTAGDETDLVICNYAAEFEDTGKTMDSDIAQTYQDQPKEHYIKALFEGKVRGFSWNKLYRRSMIEAHRLSFPLRGELEHVEDQFFSFRAHFFARSVSYVKTPLYHYRIHLSSIVQRYQKKLFESGLALYETNAAFLQENNKLEEYRKELDTFIVLHSSICMLNEWKTSGSRRLFEKLRNVGVICADPVFQESLSKTGTAPFDAKRSCLLLMAKYRMIPFVAMASAVYQRVIEYKMRNRG.

The protein belongs to the glycosyltransferase 2 family.

Its function is as follows. May be involved in the production of the exopolysaccharide (EPS) component of the extracellular matrix during biofilm formation. EPS is responsible for the adhesion of chains of cells into bundles. Required for biofilm maintenance. This Bacillus subtilis (strain 168) protein is Putative glycosyltransferase EpsH (epsH).